The following is a 509-amino-acid chain: Photosystem II CP47 reaction center protein (509 aa).

Transmembrane regions (helical) follow at residues 21 to 36 (SVHLMHTALVSGWAGS), 101 to 115 (IVLSGLLFLASIWHW), 140 to 156 (GIHLVLSSLLCFGFGAF), 203 to 218 (IAAGTVGILAGVFHLN), 237 to 252 (VLSSSIAAVFFASFVV), and 457 to 472 (NFALLFFFGHLWHGSR).

Belongs to the PsbB/PsbC family. PsbB subfamily. In terms of assembly, PSII is composed of 1 copy each of membrane proteins PsbA, PsbB, PsbC, PsbD, PsbE, PsbF, PsbH, PsbI, PsbJ, PsbK, PsbL, PsbM, PsbT, PsbY, PsbZ, Psb30/Ycf12, at least 3 peripheral proteins of the oxygen-evolving complex and a large number of cofactors. It forms dimeric complexes. Binds multiple chlorophylls. PSII binds additional chlorophylls, carotenoids and specific lipids. is required as a cofactor.

It is found in the plastid. The protein resides in the chloroplast thylakoid membrane. In terms of biological role, one of the components of the core complex of photosystem II (PSII). It binds chlorophyll and helps catalyze the primary light-induced photochemical processes of PSII. PSII is a light-driven water:plastoquinone oxidoreductase, using light energy to abstract electrons from H(2)O, generating O(2) and a proton gradient subsequently used for ATP formation. This is Photosystem II CP47 reaction center protein from Cyanidium caldarium (Red alga).